The following is a 48-amino-acid chain: U-reduvitoxin-Pr5a (48 aa).

The signal sequence occupies residues 1-19; the sequence is MRLFLIFTFIVASLASVYG. 3 disulfides stabilise this stretch: C20–C34, C27–C39, and C33–C44.

This sequence belongs to the venom Ptu1-like knottin family. As to expression, expressed by the venom gland.

It localises to the secreted. Binds reversibly and blocks P/Q-type voltage-gated calcium channels (Cav). The sequence is that of U-reduvitoxin-Pr5a from Platymeris rhadamanthus (Red spot assassin bug).